Here is a 141-residue protein sequence, read N- to C-terminus: Hemoglobin subunit alpha-1 (141 aa).

In terms of domain architecture, Globin spans 1 to 141; the sequence is VLSAADKGNV…VSTVLTSKYR (141 aa). Histidine 58 provides a ligand contact to O2. Histidine 87 lines the heme b pocket.

It belongs to the globin family. In terms of assembly, heterotetramer of two alpha chains and two beta chains. As to expression, red blood cells.

Its function is as follows. Involved in oxygen transport from the lung to the various peripheral tissues. This is Hemoglobin subunit alpha-1 from Bos mutus grunniens (Wild yak).